The following is a 76-amino-acid chain: Nemertide alpha-1 (76 aa).

The N-terminal stretch at 1–28 (YRIASSSIAKMKTAVFLVGLLFLGLVFA) is a signal peptide. The propeptide occupies 29–44 (DEAAIDSEFDQSIDKR). 3 disulfides stabilise this stretch: C46-C60, C53-C64, and C59-C70. 4-hydroxyproline is present on residues P72 and P73.

Belongs to the nemertide family. In terms of tissue distribution, confined to the epidermis and to the mucus layer.

The protein localises to the secreted. Its function is as follows. Highly potent toxin against insect sodium channel (Nav) and with less potent activity against mammalian sodium channels. Potently inhibits inactivation of insect sodium channels of B.germanica (BgNav1) (EC(50)=8.6 nM), D.melanogaster (Dm Nav1), and arachnid sodium channel V.destructor (VdNav1). Also delays the inactivation of most mammalian Nav channels tested (human Nav1.1/SCN1A; EC(50)=124.1 nM, rat Nav1.2/SCN2A; EC(50)=359.6 nM, rat Nav1.3/SCN3A; EC(50)=135.4 nM, rat Nav1.4/SCN4A; EC(50)=145.5 nM, human Nav1.5/SCN5A; EC(50)=138.3 nM, mouse Nav1.6/SCN8A; EC(50)=240.4 nM, human Nav1.9/SCN9A; EC(50)=76.5 nM). 1 uM is enough to completely inhibits the inactivation, resulting in sustained non-inactivating currents. In addition, the toxin significantly enhances the recovery from inactivation, and the open state is not required for the toxin to interact with the channel. In vivo, injection into green crabs (Carcinus maenas at 1 mug/kg) of small doses (1-5 ug/kg) results in slow and fast permanent paralysis, whereas injection of high doses (more than 10 ug/kg) causes death. Injection into juvenile Blaptica dubia cockroaches results in death or permanent paralysis at doses higher than 7.1 ug/kg. Injection into brine shrimp (Artemia salina) stops movement or causes death after 24 hours (EC(50)=0.3 uM). In the rare inherited cardiac arrhythmia Brugada syndrome 1 (BRGDA1), this toxin is able to restore the loss of function by reducing channel inactivation, without affecting activation, by binding to Nav1.5/SCN5A. The chain is Nemertide alpha-1 from Lineus lacteus (Ribbon worm).